A 91-amino-acid polypeptide reads, in one-letter code: Class I hydrophobin E (91 aa).

An N-terminal signal peptide occupies residues 1 to 16; sequence MKFSIAAIALAAVAVA. 4 disulfide bridges follow: C30-C72, C42-C64, C43-C55, and C73-C89. N-linked (GlcNAc...) asparagine glycosylation is present at N83.

It belongs to the fungal hydrophobin family.

The protein localises to the secreted. It is found in the cell wall. Its subcellular location is the vacuole. It localises to the cytoplasmic vesicle. Functionally, aerial growth, conidiation, and dispersal of filamentous fungi in the environment rely upon a capability of their secreting small amphipathic proteins called hydrophobins (HPBs) with low sequence identity. Class I can self-assemble into an outermost layer of rodlet bundles on aerial cell surfaces, conferring cellular hydrophobicity that supports fungal growth, development and dispersal; whereas Class II form highly ordered films at water-air interfaces through intermolecular interactions but contribute nothing to the rodlet structure. Hyd1E contributes to certain cell wall-related features, such as hydrophobicity but is not involved in cell wall-related events during fungal proliferation in host hemocoel. Does not contribute to conidial hydrophobicity. This Beauveria bassiana (strain ARSEF 2860) (White muscardine disease fungus) protein is Class I hydrophobin E.